The sequence spans 751 residues: Putative tyrosine-protein kinase EpsB (751 aa).

Residues 1-31 (MTQNLSQPPAVNAPESELDLVRYLDVLVANR) are Cytoplasmic-facing. The helical transmembrane segment at 32–52 (WLIAGIAAVVMLLGATYAFLA) threads the bilayer. The Periplasmic segment spans residues 53–444 (RPVYEADVLV…VPEEPVKPKK (392 aa)). Residues 445-465 (LTVTALAGVLGVVLGVVAAFV) traverse the membrane as a helical segment. Residues 466–751 (RNTLFGGITE…PSAEAEAESA (286 aa)) lie on the Cytoplasmic side of the membrane.

The protein belongs to the etk/wzc family.

Its subcellular location is the cell inner membrane. It catalyses the reaction L-tyrosyl-[protein] + ATP = O-phospho-L-tyrosyl-[protein] + ADP + H(+). Its function is as follows. Probably involved in polymerization and/or export of exopolysaccharide EPS I which functions as a virulence factor. May be involved in an ATP-dependent process in the pathway for EPS I production, possibly export of the trimeric repeat units across the inner membrane or their polymerization. The sequence is that of Putative tyrosine-protein kinase EpsB (epsB) from Ralstonia nicotianae (strain ATCC BAA-1114 / GMI1000) (Ralstonia solanacearum).